Reading from the N-terminus, the 574-residue chain is Streptolysin O (574 aa).

An N-terminal signal peptide occupies residues 1 to 36; it reads MKDMSNKKIFKKYSRVAGLLTAALIVGNLVTANADS. A compositionally biased stretch (low complexity) spans 37-52; sequence NKQNTANTETTTTNEQ. 2 disordered regions span residues 37–64 and 84–111; these read NKQN…TTEK and KEMP…HTEE. Residues 53 to 64 are compositionally biased toward basic and acidic residues; the sequence is PKPESSELTTEK. 4 beta stranded membrane-spanning segments follow: residues 263 to 276, 283 to 292, 361 to 370, and 378 to 390; these read KSQI…NSKI, IDFKSISKGE, SNDVEAAFSA, and KTNG…LENS. The Conserved undecapeptide motif lies at 532-542; that stretch reads ECTGLAWEWWR. The Cholesterol binding signature appears at 564–565; the sequence is TL.

The protein belongs to the cholesterol-dependent cytolysin family. In terms of assembly, homooligomeric pore complex of 35 to 50 subunits; when inserted in the host membrane.

The protein localises to the secreted. Its subcellular location is the host cell membrane. A cholesterol-dependent toxin that causes cytolysis by forming pores in cholesterol containing host membranes. After binding to target membranes, the protein undergoes a major conformation change, leading to its insertion in the host membrane and formation of an oligomeric pore complex. Cholesterol is required for binding to host membranes, membrane insertion and pore formation; cholesterol binding is mediated by a Thr-Leu pair in the C-terminus. Can be reversibly inactivated by oxidation. The sequence is that of Streptolysin O (slo) from Streptococcus dysgalactiae subsp. equisimilis (Streptococcus equisimilis).